Consider the following 545-residue polypeptide: Esterase-5C (545 aa).

An N-terminal signal peptide occupies residues 1 to 19; the sequence is MLAARLIILLSFYWLSASA. A disulfide bond links C84 and C103. Residue N113 is glycosylated (N-linked (GlcNAc...) asparagine). The active-site Acyl-ester intermediate is S207. The cysteines at positions 259 and 271 are disulfide-linked. An N-linked (GlcNAc...) asparagine glycan is attached at N421. H467 acts as the Charge relay system in catalysis. The N-linked (GlcNAc...) asparagine glycan is linked to N507. C515 and C536 are disulfide-bonded.

This sequence belongs to the type-B carboxylesterase/lipase family.

The protein localises to the secreted. It carries out the reaction a carboxylic ester + H2O = an alcohol + a carboxylate + H(+). The sequence is that of Esterase-5C (Est-5C) from Drosophila persimilis (Fruit fly).